A 522-amino-acid polypeptide reads, in one-letter code: MVDDKEKNMKCLTFFLMLPETVKNRSKKSSKKANTGSSSSNSSKLPPVCYEIITLKTKKKKMAADIFPRKKPANSSSTSVQQYHQQNLSNNNLIPAPNWQGLYPTIRERNAVMFNNDLMADVHFVVGPPGGTQRLPGHKYVLAVGSSVFHAMFYGELAEDKDEIRIPDVEPAAFLAMLKYIYCDEIDLAADTVLATLYAAKKYIVPHLARACVNFLETSLSAKNACVLLSQSCLFEEPDLTQRCWEVIDAQAELALKSEGFCDIDFQTLESILRRETLNAKEIVVFEAALNWAEVECQRQDLALSIENKRKVLGKALYLIRIPTMALDDFANGAAQSGVLTLNETNDIFLWYTAAKKPELQFVSKARKGLVPQRCHRFQSCAYRSNQWRYRGRCDSIQFAVDKRVFIAGFGLYGSSCGSAEYSAKIELKRQGVVLGQNLSKYFSDGSSNTFPVWFEYPVQIEPDTFYTASVILDGNELSYFGQEGMTEVQCGKVTVQFQCSSDSTNGTGVQGGQIPELIFYA.

The 71-residue stretch at 120–190 (ADVHFVVGPP…IYCDEIDLAA (71 aa)) folds into the BTB domain. In terms of domain architecture, BACK spans 235-300 (FEEPDLTQRC…NWAEVECQRQ (66 aa)).

Strongly expressed in the primary visual cortex.

It is found in the cytoplasm. It localises to the cytosol. The protein resides in the nucleus. In terms of biological role, acts as a key regulator of dendritic field orientation during development of sensory cortex. Also directs dendrites toward active axon terminals when ectopically expressed. In Callithrix jacchus (White-tufted-ear marmoset), this protein is BTB/POZ domain-containing protein 3 (BTBD3).